Here is an 826-residue protein sequence, read N- to C-terminus: Putative pentatricopeptide repeat-containing protein At1g13630 (826 aa).

PPR repeat units follow at residues 228-262 (NEHTYSTVVDGLCRQQKLEDAVLFLRTSEWKDIGP), 263-297 (SVVSFNSIMSGYCKLGFVDMAKSFFCTVLKCGLVP), 298-332 (SVYSHNILINGLCLVGSIAEALELASDMNKHGVEP), 333-367 (DSVTYNILAKGFHLLGMISGAWEVIRDMLDKGLSP), 368-402 (DVITYTILLCGQCQLGNIDMGLVLLKDMLSRGFEL), 404-438 (SIIPCSVMLSGLCKTGRIDEALSLFNQMKADGLSP), 439-473 (DLVAYSIVIHGLCKLGKFDMALWLYDEMCDKRILP), 474-508 (NSRTHGALLLGLCQKGMLLEARSLLDSLISSGETL), 509-543 (DIVLYNIVIDGYAKSGCIEEALELFKVVIETGITP), 544-578 (SVATFNSLIYGYCKTQNIAEARKILDVIKLYGLAP), 579-613 (SVVSYTTLMDAYANCGNTKSIDELRREMKAEGIPP), 614-648 (TNVTYSVIFKGLCRGWKHENCNHVLRERIFEKCKQ), 661-695 (DQITYNTIIQYLCRVKHLSGAFVFLEIMKSRNLDA), 696-730 (SSATYNILIDSLCVYGYIRKADSFIYSLQEQNVSL), 731-765 (SKFAYTTLIKAHCVKGDPEMAVKLFHQLLHRGFNV), and 766-800 (SIRDYSAVINRLCRRHLVNESKFFFCLMLSQGISP).

This sequence belongs to the PPR family. P subfamily.

This chain is Putative pentatricopeptide repeat-containing protein At1g13630, found in Arabidopsis thaliana (Mouse-ear cress).